Reading from the N-terminus, the 715-residue chain is Polyribonucleotide nucleotidyltransferase (715 aa).

Residues aspartate 488 and aspartate 494 each coordinate Mg(2+). The 60-residue stretch at 555–614 folds into the KH domain; the sequence is PRIEVMHIPTDKIRDVIGSGGKVIREIVEKTGAKINIEDDGTVKIASSNAKEIEAAKKWI. Residues 624-692 enclose the S1 motif domain; it reads GEIYEGTVVK…ERGKVRLSMK (69 aa).

The protein belongs to the polyribonucleotide nucleotidyltransferase family. Mg(2+) is required as a cofactor.

It localises to the cytoplasm. The enzyme catalyses RNA(n+1) + phosphate = RNA(n) + a ribonucleoside 5'-diphosphate. Involved in mRNA degradation. Catalyzes the phosphorolysis of single-stranded polyribonucleotides processively in the 3'- to 5'-direction. The polypeptide is Polyribonucleotide nucleotidyltransferase (Mesorhizobium japonicum (strain LMG 29417 / CECT 9101 / MAFF 303099) (Mesorhizobium loti (strain MAFF 303099))).